Consider the following 200-residue polypeptide: Ribosome maturation factor RimP (200 aa).

This sequence belongs to the RimP family.

The protein localises to the cytoplasm. Its function is as follows. Required for maturation of 30S ribosomal subunits. This Polaromonas sp. (strain JS666 / ATCC BAA-500) protein is Ribosome maturation factor RimP.